Consider the following 264-residue polypeptide: Nicotinamide N-methyltransferase (264 aa).

Residue arginine 18 is modified to Citrulline; alternate. Residues tyrosine 20, tyrosine 25, glycine 63, tyrosine 69, aspartate 85, threonine 87, and asparagine 90 each coordinate S-adenosyl-L-methionine. At arginine 132 the chain carries Citrulline; alternate. S-adenosyl-L-methionine is bound by residues 142–143 and threonine 163; that span reads DV. Residue arginine 181 is modified to Citrulline; alternate. Aspartate 197 and serine 213 together coordinate nicotinamide.

This sequence belongs to the class I-like SAM-binding methyltransferase superfamily. NNMT/PNMT/TEMT family. Monomer. In terms of processing, deiminated by PADI1 and PADI2. In terms of tissue distribution, expressed in white adipose tissue and liver (at protein level).

The protein localises to the cytoplasm. It catalyses the reaction nicotinamide + S-adenosyl-L-methionine = 1-methylnicotinamide + S-adenosyl-L-homocysteine. It functions in the pathway cofactor metabolism. It participates in amino-acid degradation. Inhibited by 6-methoxynicotinamide (JBSNF-000088). Catalyzes the N-methylation of nicotinamide using the universal methyl donor S-adenosyl-L-methionine to form N1-methylnicotinamide and S-adenosyl-L-homocysteine, a predominant nicotinamide/vitamin B3 clearance pathway. Plays a central role in regulating cellular methylation potential, by consuming S-adenosyl-L-methionine and limiting its availability for other methyltransferases. Actively mediates genome-wide epigenetic and transcriptional changes through hypomethylation of repressive chromatin marks, such as H3K27me3. In a developmental context, contributes to low levels of the repressive histone marks that characterize pluripotent embryonic stem cell pre-implantation state. Acts as a metabolic regulator primarily on white adipose tissue energy expenditure as well as hepatic gluconeogenesis and cholesterol biosynthesis. In white adipocytes, regulates polyamine flux by consuming S-adenosyl-L-methionine which provides for propylamine group in polyamine biosynthesis, whereas by consuming nicotinamide controls NAD(+) levels through the salvage pathway. Via its product N1-methylnicotinamide regulates protein acetylation in hepatocytes, by repressing the ubiquitination and increasing the stability of SIRT1 deacetylase. Can also N-methylate other pyridines structurally related to nicotinamide and play a role in xenobiotic detoxification. The protein is Nicotinamide N-methyltransferase (Nnmt) of Mus musculus (Mouse).